Here is a 573-residue protein sequence, read N- to C-terminus: Probable pectinesterase/pectinesterase inhibitor 41 (573 aa).

An N-terminal signal peptide occupies residues 1–22 (MLSLKLFLVTLFLSLQTLFIAS). The tract at residues 25-184 (LLPSNSSSTI…TKLFSVSLAL (160 aa)) is pectinesterase inhibitor 41. Residues N29, N119, N173, N264, N268, N281, and N320 are each glycosylated (N-linked (GlcNAc...) asparagine). The segment at 259–557 (VTVNQNGTGN…FTVENFLLGD (299 aa)) is pectinesterase 41. A substrate-binding site is contributed by T336. N353 carries N-linked (GlcNAc...) asparagine glycosylation. Q366 contributes to the substrate binding site. The active-site Proton donor; for pectinesterase activity is D389. The cysteines at positions 403 and 423 are disulfide-linked. D410 serves as the catalytic Nucleophile; for pectinesterase activity. N-linked (GlcNAc...) asparagine glycosylation is found at N456 and N469. Substrate-binding residues include R478 and W480. N-linked (GlcNAc...) asparagine glycosylation is found at N520, N541, and N547.

It in the N-terminal section; belongs to the PMEI family. This sequence in the C-terminal section; belongs to the pectinesterase family. Expressed in flowers, siliques, floral stems and rosettes leaves.

The protein resides in the secreted. The protein localises to the cell wall. It carries out the reaction [(1-&gt;4)-alpha-D-galacturonosyl methyl ester](n) + n H2O = [(1-&gt;4)-alpha-D-galacturonosyl](n) + n methanol + n H(+). Its pathway is glycan metabolism; pectin degradation; 2-dehydro-3-deoxy-D-gluconate from pectin: step 1/5. Functionally, acts in the modification of cell walls via demethylesterification of cell wall pectin. In Arabidopsis thaliana (Mouse-ear cress), this protein is Probable pectinesterase/pectinesterase inhibitor 41 (PME41).